Here is a 207-residue protein sequence, read N- to C-terminus: Outer-membrane lipoprotein LolB (207 aa).

Residues 1 to 21 form the signal peptide; it reads MPLPDFRLIRLLPLAALVLTA. Residue Cys-22 is the site of N-palmitoyl cysteine attachment. The S-diacylglycerol cysteine moiety is linked to residue Cys-22.

It belongs to the LolB family. In terms of assembly, monomer.

The protein resides in the cell outer membrane. Functionally, plays a critical role in the incorporation of lipoproteins in the outer membrane after they are released by the LolA protein. This Escherichia coli (strain SMS-3-5 / SECEC) protein is Outer-membrane lipoprotein LolB.